Here is a 589-residue protein sequence, read N- to C-terminus: WD repeat-containing protein 26 homolog (589 aa).

Residues Met-1–Ile-57 are disordered. Residues Ser-25 to Ser-39 are compositionally biased toward low complexity. Residues Arg-64–Leu-96 form the LisH domain. The CTLH domain maps to His-97–Asp-154. 7 WD repeats span residues Ser-272–Leu-311, Gly-317–Glu-358, Gly-360–Trp-398, Gln-401–Ile-440, Glu-442–Ser-480, Gly-484–Glu-526, and Gly-529–Gln-569.

As to quaternary structure, interacts with RANBPM. Expressed in roots, leaves and flowers.

Its subcellular location is the cytoplasm. In terms of biological role, acts as a component involved in the crosstalk regulation between light, hormone and abiotic stress response. In Arabidopsis thaliana (Mouse-ear cress), this protein is WD repeat-containing protein 26 homolog.